Reading from the N-terminus, the 107-residue chain is Urease subunit beta (107 aa).

The protein belongs to the urease beta subunit family. As to quaternary structure, heterotrimer of UreA (gamma), UreB (beta) and UreC (alpha) subunits. Three heterotrimers associate to form the active enzyme.

The protein resides in the cytoplasm. It carries out the reaction urea + 2 H2O + H(+) = hydrogencarbonate + 2 NH4(+). It participates in nitrogen metabolism; urea degradation; CO(2) and NH(3) from urea (urease route): step 1/1. In Escherichia coli, this protein is Urease subunit beta.